The sequence spans 263 residues: MDVMNAFDSQAEDSPLSIGHSLRRRPLARKKLSEMVEEELEQMIRRHEFGEGEQLPSERELMAFFNVGRPSVREALAALKRKGLVQINNGERARVSRPSADTIISELSGMAKDFLSHPGGIAHFEQLRLFFESSLVRYAAEHATDEQIALLTKALEINSQSLDDNALFIRSDVEFHRVLAEIPGNPIFMAIHVALLDWLIAARPGVADRELHEHNNLSYQQHIAIVDAIRQRDPDKADRALQTHLNSVSATWHAFGKKNQKMR.

The HTH gntR-type domain maps to 30-98 (KKLSEMVEEE…NGERARVSRP (69 aa)). A DNA-binding region (H-T-H motif) is located at residues 58 to 77 (ERELMAFFNVGRPSVREALA).

The protein belongs to the NanR family.

Its function is as follows. Transcriptional repressor that controls expression of the genes required for the catabolism of sialic acids. The protein is HTH-type transcriptional repressor NanR of Salmonella bongori (strain ATCC 43975 / DSM 13772 / NCTC 12419).